A 495-amino-acid chain; its full sequence is MANPDHVSDVLHNLSIDPTTKALAPDSETKLQGAYGGNGNDFLLNDELVEATKIGKPSLLSKDGGVTKDKGSNLKKLGYQSAAYNAKGSYGKGAYAYGYYPPAYQYPRHGYTGSYASGKTNLQYQYLTQQGRSAGNGQSYGGYMDNIYSNYGMCGPYTNGYGYGSYGYDSWKYMPNWYAVNNTYKPRNGYHGYGKENIEGLNEMNRGPRAKGFNSQDGSKVMAVSLKEQRVTETEKLSEDVSLLDPKDYNKIDFPETYTEAKFYVIKSYSEDDIHKSIKYSVWSSTPNGNKKLDASYNEAKQKSDGCPVFLLFSVNTSGQFVGLAEMVGPVDFNKTVEYWQQDKWIGCFPVKWHFVKDIPNSSLRHITLENNENKPVTNSRDTQEVKLEQGIKVIKIFKDHASKTCILDDFEFYENRQKIIQERKSKHLQIKKQTLVANADKGVMSKINLVKPQESTTASEDAAALGVAAEVTKESKVVKETELPVEKNAVATAC.

The YTH domain occupies 261–398 (AKFYVIKSYS…EQGIKVIKIF (138 aa)). Residues 267-269 (KSY), D273, 283-284 (WS), N316, W340, W345, and W353 contribute to the RNA site.

As to expression, expressed in the shoot apex, at the sites of leaf formation, and in emerging leaves.

It is found in the cytoplasm. Functionally, specifically recognizes and binds N6-methyladenosine (m6A)-containing RNAs, and regulates mRNA stability. M6A is a modification present at internal sites of mRNAs and some non-coding RNAs and plays a role in mRNA stability and processing. Required for the correct timing of leaf formation and normal leaf morphology. Required for proper trichome branching and morphology. Functions redundantly with ECT2. This is YTH domain-containing protein ECT3 from Arabidopsis thaliana (Mouse-ear cress).